Here is a 217-residue protein sequence, read N- to C-terminus: Translation initiation factor 6 (217 aa).

This sequence belongs to the eIF-6 family.

Functionally, binds to the 50S ribosomal subunit and prevents its association with the 30S ribosomal subunit to form the 70S initiation complex. The protein is Translation initiation factor 6 of Methanococcoides burtonii (strain DSM 6242 / NBRC 107633 / OCM 468 / ACE-M).